A 155-amino-acid chain; its full sequence is DNA polymerase epsilon subunit 4 (155 aa).

2 stretches are compositionally biased toward acidic residues: residues 1-16 and 24-48; these read MASEELFEAEFSEEQD and ETEEAELAETEEPLEITEESPDNPE. The interval 1 to 76 is disordered; sequence MASEELFEAE…APADNEAKMT (76 aa). The segment covering 49-65 has biased composition (polar residues); the sequence is AESTTEQLTEKPVTNGN.

As to quaternary structure, component of the DNA polymerase epsilon complex consisting of four subunits: the catalytic subunit PolE1/DNApol-epsilon255 and the accessory subunits PolE2/DNApol-epsilon58, Chrac-14/DNApolE3 and PolE4/Mes4.

The protein resides in the nucleus. Its function is as follows. Accessory component of the DNA polymerase epsilon complex. Participates in DNA repair and in chromosomal DNA replication. Has a role in cell cycle progression. Required for wing morphogenesis. This Drosophila melanogaster (Fruit fly) protein is DNA polymerase epsilon subunit 4.